The following is a 249-amino-acid chain: Basigin (249 aa).

The region spanning 1-82 (AAGTIQTSVN…VGRSNIVVEG (82 aa)) is the Ig-like C2-type domain. Topologically, residues 1-187 (AAGTIQTSVN…MTLRVRSRLA (187 aa)) are extracellular. Disulfide bonds link Cys20-Cys66 and Cys105-Cys165. Asn23, Asn132, and Asn166 each carry an N-linked (GlcNAc...) asparagine glycan. One can recognise an Ig-like V-type domain in the interval 84–179 (PRIKVGKKSE…TQGSVQEIMT (96 aa)). The helical transmembrane segment at 188 to 208 (ALWPFLGIVAEVLVLVTIIFI) threads the bilayer. At 209–249 (YEKRRKPDQTLDEDDPGAAPLKGSGHHMNDKDKNVRQRNAT) the chain is on the cytoplasmic side. The tract at residues 216–249 (DQTLDEDDPGAAPLKGSGHHMNDKDKNVRQRNAT) is disordered. Thr218 is modified (phosphothreonine). At Ser232 the chain carries Phosphoserine.

Homooligomer. Interacts with VEGFA, KDR/VEGFR2, PPIA/CYPA, SLC16A12, SLC16A11, ATP1B2, MAG, L1CAM and AJAP1. Interacts with SLC16A3; interaction mediates SLC16A3 targeting to the plasma membrane. Interacts with SLC16A1; interaction mediates SLC16A1 targeting to the plasma membrane. Interacts with PPIL2; regulates BSG transport to the cell membrane. Interacts with XKR8; promoting its localization at the cell membrane. Interacts with SLC16A6; this interaction mediates targeting to the plasma membrane.

The protein resides in the cell membrane. The protein localises to the endoplasmic reticulum membrane. Its subcellular location is the basolateral cell membrane. Functionally, signaling receptor for cyclophilins, essential for PPIA/CYPA and PPIB/CYPB-dependent signaling related to chemotaxis and adhesion of immune cells. Plays an important role in targeting the monocarboxylate transporters SLC16A1/GLUT1, SLC16A3, SLC16A8, SLC16A11 and SLC16A12 to the plasma membrane. Acts as a coreceptor for vascular endothelial growth factor receptor 2 (KDR/VEGFR2) in endothelial cells enhancing its VEGFA-mediated activation and downstream signaling. Promotes angiogenesis through EPAS1/HIF2A-mediated up-regulation of VEGFA and KDR/VEGFR2 in endothelial cells. The polypeptide is Basigin (BSG) (Cricetulus griseus (Chinese hamster)).